A 278-amino-acid polypeptide reads, in one-letter code: Probable esterase TOX9 (278 aa).

Residues Ser119, Asp222, and His250 each act as charge relay system in the active site.

Belongs to the LovG family.

It functions in the pathway mycotoxin biosynthesis. Functionally, probable esterase; part of the Tox1A locus, one of the 2 loci that mediate the biosynthesis of T-toxin, a family of linear polyketides 37 to 45 carbons in length, of which the major component is 41 carbons, and which leads to high virulence to maize. One of the PKSs (PKS1 or PKS2) could synthesize a precursor, used subsequently by the other PKS as starter unit, to add additional carbons. Variability in the length of the final carbon backbone C35-47 could be achieved by varying the number of condensation cycles, or use of different starter or extender units or might be due to decarboxylation of the penultimate product, catalyzed by DEC1. Additional proteins are required for the biosynthesis of T-toxin, including oxidoreductases RED1, RED2, RED3, LAM1 and OXI1, as well as esterase TOX9. The protein is Probable esterase TOX9 of Cochliobolus heterostrophus (strain C4 / ATCC 48331 / race T) (Southern corn leaf blight fungus).